A 169-amino-acid chain; its full sequence is Ribosome maturation factor RimM (169 aa).

The region spanning Pro-93–Leu-167 is the PRC barrel domain.

This sequence belongs to the RimM family. Binds ribosomal protein uS19.

The protein resides in the cytoplasm. Functionally, an accessory protein needed during the final step in the assembly of 30S ribosomal subunit, possibly for assembly of the head region. Essential for efficient processing of 16S rRNA. May be needed both before and after RbfA during the maturation of 16S rRNA. It has affinity for free ribosomal 30S subunits but not for 70S ribosomes. The protein is Ribosome maturation factor RimM of Ruminiclostridium cellulolyticum (strain ATCC 35319 / DSM 5812 / JCM 6584 / H10) (Clostridium cellulolyticum).